The primary structure comprises 172 residues: Translation initiation factor IF-3 (172 aa).

Belongs to the IF-3 family. As to quaternary structure, monomer.

It localises to the cytoplasm. IF-3 binds to the 30S ribosomal subunit and shifts the equilibrium between 70S ribosomes and their 50S and 30S subunits in favor of the free subunits, thus enhancing the availability of 30S subunits on which protein synthesis initiation begins. In Haemophilus influenzae (strain ATCC 51907 / DSM 11121 / KW20 / Rd), this protein is Translation initiation factor IF-3.